A 778-amino-acid polypeptide reads, in one-letter code: Lon protease (778 aa).

One can recognise a Lon N-terminal domain in the interval 6-207; that stretch reads LPLMALRDMV…TVISTLTSNI (202 aa). 356–363 contributes to the ATP binding site; sequence GPPGVGKT. In terms of domain architecture, Lon proteolytic spans 592 to 773; the sequence is EDQIGSTTGL…DQVLKHALVE (182 aa). Residues Ser-679 and Lys-722 contribute to the active site.

The protein belongs to the peptidase S16 family. In terms of assembly, homohexamer. Organized in a ring with a central cavity.

The protein localises to the cytoplasm. The catalysed reaction is Hydrolysis of proteins in presence of ATP.. Functionally, ATP-dependent serine protease that mediates the selective degradation of mutant and abnormal proteins as well as certain short-lived regulatory proteins. Required for cellular homeostasis and for survival from DNA damage and developmental changes induced by stress. Degrades polypeptides processively to yield small peptide fragments that are 5 to 10 amino acids long. Binds to DNA in a double-stranded, site-specific manner. This is Lon protease from Rickettsia felis (strain ATCC VR-1525 / URRWXCal2) (Rickettsia azadi).